Here is a 239-residue protein sequence, read N- to C-terminus: tRNA (guanine-N(7)-)-methyltransferase (239 aa).

Glu69, Glu94, Asp121, and Asp144 together coordinate S-adenosyl-L-methionine. The active site involves Asp144. Substrate is bound at residue Lys148. Residues 150 to 155 (RHNKRR) are interaction with RNA. Residues Asp180 and 217–220 (TKFE) each bind substrate.

Belongs to the class I-like SAM-binding methyltransferase superfamily. TrmB family. Monomer.

The catalysed reaction is guanosine(46) in tRNA + S-adenosyl-L-methionine = N(7)-methylguanosine(46) in tRNA + S-adenosyl-L-homocysteine. It functions in the pathway tRNA modification; N(7)-methylguanine-tRNA biosynthesis. Catalyzes the formation of N(7)-methylguanine at position 46 (m7G46) in tRNA. This chain is tRNA (guanine-N(7)-)-methyltransferase, found in Cronobacter sakazakii (strain ATCC BAA-894) (Enterobacter sakazakii).